The sequence spans 437 residues: Chromosomal replication initiator protein DnaA (437 aa).

Positions 1–74 (MNLAWNKILE…EACGDKIPVE (74 aa)) are domain I, interacts with DnaA modulators. Residues 74–98 (EILIETKATSPLQSFLEKSFDQKDF) are domain II. The domain III, AAA+ region stretch occupies residues 99–315 (QFNPDYTFET…GALNDIYLYK (217 aa)). G142, G144, K145, and T146 together coordinate ATP. The segment at 316-437 (KSYSLLFLNL…ERISSKYKLQ (122 aa)) is domain IV, binds dsDNA.

This sequence belongs to the DnaA family. Oligomerizes as a right-handed, spiral filament on DNA at oriC.

It is found in the cytoplasm. Its function is as follows. Plays an essential role in the initiation and regulation of chromosomal replication. ATP-DnaA binds to the origin of replication (oriC) to initiate formation of the DNA replication initiation complex once per cell cycle. Binds the DnaA box (a 9 base pair repeat at the origin) and separates the double-stranded (ds)DNA. Forms a right-handed helical filament on oriC DNA; dsDNA binds to the exterior of the filament while single-stranded (ss)DNA is stabiized in the filament's interior. The ATP-DnaA-oriC complex binds and stabilizes one strand of the AT-rich DNA unwinding element (DUE), permitting loading of DNA polymerase. After initiation quickly degrades to an ADP-DnaA complex that is not apt for DNA replication. Binds acidic phospholipids. The polypeptide is Chromosomal replication initiator protein DnaA (Leptospira borgpetersenii serovar Hardjo-bovis (strain JB197)).